A 553-amino-acid polypeptide reads, in one-letter code: Phenylalanine--tRNA ligase beta subunit (553 aa).

The 77-residue stretch at 273 to 349 (FNVRNIDIEV…RAFGYNNITP (77 aa)) folds into the B5 domain. The Mg(2+) site is built by D327, D333, D336, and D337.

Belongs to the phenylalanyl-tRNA synthetase beta subunit family. Type 2 subfamily. In terms of assembly, tetramer of two alpha and two beta subunits. Requires Mg(2+) as cofactor.

It localises to the cytoplasm. It carries out the reaction tRNA(Phe) + L-phenylalanine + ATP = L-phenylalanyl-tRNA(Phe) + AMP + diphosphate + H(+). The sequence is that of Phenylalanine--tRNA ligase beta subunit from Methanocella arvoryzae (strain DSM 22066 / NBRC 105507 / MRE50).